We begin with the raw amino-acid sequence, 165 residues long: Choriogonadotropin subunit beta 7 (165 aa).

The signal sequence occupies residues 1–20 (MEMFQGLLLLLLLSMGGTWA). Cystine bridges form between Cys29-Cys77, Cys43-Cys92, Cys46-Cys130, Cys54-Cys108, Cys58-Cys110, and Cys113-Cys120. N-linked (GlcNAc...) asparagine glycosylation is found at Asn33 and Asn50. The disordered stretch occupies residues 131 to 165 (DDPRFQASSSSKAPPPSLPSPSRLPGPSDTPILPQ). Residues Ser141, Ser147, Ser152, and Ser158 are each glycosylated (O-linked (GalNAc...) serine). A compositionally biased stretch (pro residues) spans 143 to 154 (APPPSLPSPSRL).

This sequence belongs to the glycoprotein hormones subunit beta family. In terms of assembly, heterodimer of a common alpha chain identical in LH, FSH, TSH and HCG and a unique beta chain distinct in each of the hormones and confers receptor and biological specificity. As to expression, high expression in the placenta throughout pregnancy.

The protein localises to the secreted. Its function is as follows. Beta subunit of the human chorionic gonadotropin (hCG). hCG is a complex glycoprotein composed of two glycosylated subunits alpha and beta which are non-covalently associated. The alpha subunit is identical to those in the pituitary gonadotropin hormones (LH, FSH and TSH). The beta subunits are distinct in each of the hormones and confer receptor and biological specificity. Has an essential role for pregnancy and maternal adaptation. Stimulates the ovaries to synthesize the steroids that are essential for the maintenance of pregnancy. The polypeptide is Choriogonadotropin subunit beta 7 (Homo sapiens (Human)).